A 246-amino-acid polypeptide reads, in one-letter code: Probable transcriptional regulatory protein NT01CX_1819 (246 aa).

It belongs to the TACO1 family.

The protein localises to the cytoplasm. In Clostridium novyi (strain NT), this protein is Probable transcriptional regulatory protein NT01CX_1819.